A 359-amino-acid polypeptide reads, in one-letter code: S-adenosylmethionine:tRNA ribosyltransferase-isomerase (359 aa).

It belongs to the QueA family. In terms of assembly, monomer.

It localises to the cytoplasm. It carries out the reaction 7-aminomethyl-7-carbaguanosine(34) in tRNA + S-adenosyl-L-methionine = epoxyqueuosine(34) in tRNA + adenine + L-methionine + 2 H(+). It participates in tRNA modification; tRNA-queuosine biosynthesis. Functionally, transfers and isomerizes the ribose moiety from AdoMet to the 7-aminomethyl group of 7-deazaguanine (preQ1-tRNA) to give epoxyqueuosine (oQ-tRNA). In Ralstonia pickettii (strain 12J), this protein is S-adenosylmethionine:tRNA ribosyltransferase-isomerase.